The chain runs to 644 residues: Macrolide export ATP-binding/permease protein MacB (644 aa).

In terms of domain architecture, ABC transporter spans 6–244; that stretch reads LELDGVWRRF…SQATEAQPDG (239 aa). 42–49 lines the ATP pocket; that stretch reads GASGSGKS. A run of 5 helical transmembrane segments spans residues 271–291, 415–435, 517–537, 574–594, and 609–629; these read ALTMLGIVIGIASVVSVIAIG, EAVGRVILVGMVPATVIGVVA, LSLLLALVAVISLVVGGIGVM, LVCLVGGAIGVALSYGVSFVF, and VIALAVACSSLIGVLFGFLPA.

The protein belongs to the ABC transporter superfamily. Macrolide exporter (TC 3.A.1.122) family. As to quaternary structure, homodimer.

The protein localises to the cell inner membrane. Functionally, non-canonical ABC transporter that contains transmembrane domains (TMD), which form a pore in the inner membrane, and an ATP-binding domain (NBD), which is responsible for energy generation. Confers resistance against macrolides. The protein is Macrolide export ATP-binding/permease protein MacB of Chromobacterium violaceum (strain ATCC 12472 / DSM 30191 / JCM 1249 / CCUG 213 / NBRC 12614 / NCIMB 9131 / NCTC 9757 / MK).